Reading from the N-terminus, the 145-residue chain is Glutaconyl-CoA decarboxylase subunit gamma (145 aa).

The segment at 52 to 82 is disordered; that stretch reads APAPAAAPAAAPAPAAKPAAAAPAGSVTVSA. Residues 57–75 are compositionally biased toward low complexity; the sequence is AAPAAAPAPAAKPAAAAPA. In terms of domain architecture, Biotinyl-binding spans 77–145; it reads SVTVSAPMPG…VATGDVMVIL (69 aa). Lys-112 carries the post-translational modification N6-biotinyllysine.

In terms of assembly, heterooctamer consisting of two alpha, two beta, two gamma and two delta subunits. Biotin serves as cofactor.

The enzyme catalyses (2E)-glutaconyl-CoA + Na(+)(in) + H(+) = (2E)-butenoyl-CoA + Na(+)(out) + CO2. The protein operates within amino-acid degradation; L-glutamate degradation via hydroxyglutarate pathway; crotonoyl-CoA from L-glutamate: step 5/5. Biotin carrier subunit of the primary sodium pump glutaconyl-CoA decarboxylase (GCD). The polypeptide is Glutaconyl-CoA decarboxylase subunit gamma (gcdC) (Acidaminococcus fermentans (strain ATCC 25085 / DSM 20731 / CCUG 9996 / CIP 106432 / VR4)).